The following is a 343-amino-acid chain: Protein RecA (343 aa).

66-73 (GPESSGKT) is a binding site for ATP.

This sequence belongs to the RecA family.

The protein resides in the cytoplasm. Functionally, can catalyze the hydrolysis of ATP in the presence of single-stranded DNA, the ATP-dependent uptake of single-stranded DNA by duplex DNA, and the ATP-dependent hybridization of homologous single-stranded DNAs. It interacts with LexA causing its activation and leading to its autocatalytic cleavage. In Rickettsia massiliae (strain Mtu5), this protein is Protein RecA.